The sequence spans 595 residues: Glycine betaine transporter BetP (595 aa).

Residues 1 to 59 (MTTSDPNPKPIVEDAQPEQITATEELAGLLENPTNLEGKLADAEEEIILEGEDTQASLN) lie on the Cytoplasmic side of the membrane. Residues 60 to 80 (WSVIVPALVIVLATVVWGIGF) form a helical membrane-spanning segment. Over 81–98 (KDSFTNFASSALSAVVDN) the chain is Periplasmic. Residues 99–119 (LGWAFILFGTVFVFFIVVIAA) form a helical membrane-spanning segment. The Cytoplasmic portion of the chain corresponds to 120-137 (SKFGTIRLGRIDEAPEFR). Residues 138–158 (TVSWISMMFAAGMGIGLMFYG) form a helical membrane-spanning segment. Na(+) is bound by residues A147, A148, and M150. Position 152–153 (152–153 (IG)) interacts with glycine betaine. The Periplasmic segment spans residues 159–185 (TTEPLTFYRNGVPGHDEHNVGVAMSTT). The helical transmembrane segment at 186 to 206 (MFHWTLHPWAIYAIVGLAIAY) threads the bilayer. Residues 207–236 (STFRVGRKQLLSSAFVPLIGEKGAEGWLGK) are Cytoplasmic-facing. A helical membrane pass occupies residues 237 to 257 (LIDILAIIATVFGTACSLGLG). S253 provides a ligand contact to glycine betaine. Topologically, residues 258–276 (ALQIGAGLSAANIIEDPSD) are periplasmic. The helical transmembrane segment at 277 to 296 (WTIVGIVSVLTLAFIFSAIS) threads the bilayer. The Cytoplasmic portion of the chain corresponds to 297–299 (GVG). Residues 300–323 (KGIQYLSNANMVLAALLAIFVFVV) traverse the membrane as a helical segment. S306 and M310 together coordinate Na(+). Residues 324–365 (GPTVSILNLLPGSIGNYLSNFFQMAGRTAMSADGTAGEWLGS) are Periplasmic-facing. A helical transmembrane segment spans residues 366-386 (WTIFYWAWWISWSPFVGMFLA). 373–377 (WWISW) lines the glycine betaine pocket. The Cytoplasmic segment spans residues 387-396 (RISRGRSIRE). A helical transmembrane segment spans residues 397–417 (FILGVLLVPAGVSTVWFSIFG). Residues 418 to 451 (GTAIVFEQNGESIWGDGAAEEQLFGLLHALPGGQ) lie on the Periplasmic side of the membrane. The helical transmembrane segment at 452–476 (IMGIIAMILLGTFFITSADSASTVM) threads the bilayer. At 477-489 (GTMSQHGQLEANK) the chain is on the cytoplasmic side. The chain crosses the membrane as a helical span at residues 490–510 (WVTAAWGVATAAIGLTLLLSG). The Periplasmic portion of the chain corresponds to 511–520 (GDNALSNLQN). A helical membrane pass occupies residues 521 to 541 (VTIVAATPFLFVVIGLMFALV). At 542–595 (KDLSNDVIYLEYREQQRFNARLARERRVHNEHRKRELAAKRRRERKASGAGKRR) the chain is on the cytoplasmic side. The disordered stretch occupies residues 570 to 595 (HNEHRKRELAAKRRRERKASGAGKRR). A compositionally biased stretch (basic residues) spans 581–595 (KRRRERKASGAGKRR).

The protein belongs to the BCCT transporter (TC 2.A.15) family. In terms of assembly, homotrimer. The monomer can accumulate glycine betaine, but trimerization is required to properly respond to osmotic stress.

The protein localises to the cell inner membrane. With respect to regulation, uptake is activated by hyperosmotic stress. Osmoresponsive activation is triggered by a change in the internal K(+) concentration. In addition, shows a pronounced chill stimulation, at temperatures around 10 degrees Celsius. Chill activation may be influenced by the membrane lipid composition. Uptake is completely abolished by the uncoupler CCCP, and to a different extent by the ionophores valinomycin and nigericin. Functionally, involved in response to osmotic stress. High-affinity glycine betaine-specific uptake system, which couples the uptake of glycine betaine to the symport of two Na(+) ions. Transport is driven both by the Na(+) gradient and by the electrical potential. In addition, functions both as an osmosensor and as an osmoregulator that transduces signal to the catalytic part of the carrier protein, which adapts its activity to the extent of osmotic stress. This Corynebacterium glutamicum (strain ATCC 13032 / DSM 20300 / JCM 1318 / BCRC 11384 / CCUG 27702 / LMG 3730 / NBRC 12168 / NCIMB 10025 / NRRL B-2784 / 534) protein is Glycine betaine transporter BetP.